A 138-amino-acid chain; its full sequence is Acidic phospholipase A2 Ts-A3 (138 aa).

The N-terminal stretch at 1-16 (MRTLWIMAVLLLGVEG) is a signal peptide. 7 disulfide bridges follow: Cys42/Cys132, Cys44/Cys60, Cys59/Cys111, Cys65/Cys138, Cys66/Cys104, Cys73/Cys97, and Cys91/Cys102. Ca(2+) contacts are provided by Tyr43, Gly45, and Gly47. His63 is an active-site residue. Ca(2+) is bound at residue Asp64. Asp105 is an active-site residue.

It depends on Ca(2+) as a cofactor. As to expression, expressed by the venom gland.

The protein resides in the secreted. It catalyses the reaction a 1,2-diacyl-sn-glycero-3-phosphocholine + H2O = a 1-acyl-sn-glycero-3-phosphocholine + a fatty acid + H(+). Functionally, snake venom phospholipase A2 (PLA2) that shows a moderate inhibition of ADP-induced human platelet aggregation when tested on platelet rich plasma. Exhibits high hydrolytic activities and prefers the anionic micelles (dPPC with deoxycholate) to the zwitterionic micelles (dPPC with Triton X-100). PLA2 catalyzes the calcium-dependent hydrolysis of the 2-acyl groups in 3-sn-phosphoglycerides. This is Acidic phospholipase A2 Ts-A3 from Trimeresurus stejnegeri (Chinese green tree viper).